Reading from the N-terminus, the 870-residue chain is Histidine biosynthesis trifunctional protein (870 aa).

The phosphoribosyl-AMP cyclohydrolase stretch occupies residues M1–F285. A phosphoribosyl-ATP pyrophosphohydrolase region spans residues C286 to A367. The interval A368–N870 is histidinol dehydrogenase. Zn(2+) is bound by residues Q693 and H696. Catalysis depends on residues E762 and H763. Zn(2+) is bound by residues D796 and H855.

It in the C-terminal section; belongs to the histidinol dehydrogenase family. Requires Zn(2+) as cofactor.

The catalysed reaction is 1-(5-phospho-beta-D-ribosyl)-5'-AMP + H2O = 1-(5-phospho-beta-D-ribosyl)-5-[(5-phospho-beta-D-ribosylamino)methylideneamino]imidazole-4-carboxamide. The enzyme catalyses 1-(5-phospho-beta-D-ribosyl)-ATP + H2O = 1-(5-phospho-beta-D-ribosyl)-5'-AMP + diphosphate + H(+). It carries out the reaction L-histidinol + 2 NAD(+) + H2O = L-histidine + 2 NADH + 3 H(+). The protein operates within amino-acid biosynthesis; L-histidine biosynthesis; L-histidine from 5-phospho-alpha-D-ribose 1-diphosphate: step 2/9. Its pathway is amino-acid biosynthesis; L-histidine biosynthesis; L-histidine from 5-phospho-alpha-D-ribose 1-diphosphate: step 3/9. It participates in amino-acid biosynthesis; L-histidine biosynthesis; L-histidine from 5-phospho-alpha-D-ribose 1-diphosphate: step 9/9. The sequence is that of Histidine biosynthesis trifunctional protein (his-3) from Neurospora crassa (strain ATCC 24698 / 74-OR23-1A / CBS 708.71 / DSM 1257 / FGSC 987).